The primary structure comprises 610 residues: Elongation factor 4 (610 aa).

Residues glutamate 11–threonine 193 form the tr-type G domain. Residues aspartate 23–threonine 28 and asparagine 140–aspartate 143 contribute to the GTP site.

Belongs to the TRAFAC class translation factor GTPase superfamily. Classic translation factor GTPase family. LepA subfamily.

It is found in the cell membrane. It carries out the reaction GTP + H2O = GDP + phosphate + H(+). Its function is as follows. Required for accurate and efficient protein synthesis under certain stress conditions. May act as a fidelity factor of the translation reaction, by catalyzing a one-codon backward translocation of tRNAs on improperly translocated ribosomes. Back-translocation proceeds from a post-translocation (POST) complex to a pre-translocation (PRE) complex, thus giving elongation factor G a second chance to translocate the tRNAs correctly. Binds to ribosomes in a GTP-dependent manner. This is Elongation factor 4 from Streptococcus pyogenes serotype M49 (strain NZ131).